We begin with the raw amino-acid sequence, 157 residues long: Protein Smg homolog (157 aa).

Belongs to the Smg family.

The chain is Protein Smg homolog from Xanthomonas oryzae pv. oryzae (strain MAFF 311018).